A 418-amino-acid chain; its full sequence is Calreticulin (418 aa).

The signal sequence occupies residues 1–17 (MLLPVPLLLGLLGLAAA). The N-domain stretch occupies residues 18 to 197 (EPVVYFKEQF…NSQVESGSLE (180 aa)). Gln-26 provides a ligand contact to Ca(2+). At Lys-48 the chain carries N6-acetyllysine. 2 residues coordinate Ca(2+): Lys-62 and Lys-64. The residue at position 64 (Lys-64) is an N6-(2-hydroxyisobutyryl)lysine. Cys-105 and Cys-137 are oxidised to a cystine. Positions 109, 111, 128, and 135 each coordinate an alpha-D-glucoside. Lys-159 is subject to N6-acetyllysine. Residues 191 to 202 (VESGSLEDDWDF) form a 1-1 repeat. Residues 191–255 (VESGSLEDDW…DAKKPEDWDE (65 aa)) are 4 X approximate repeats. The tract at residues 193–277 (SGSLEDDWDF…NPEYKGEWKP (85 aa)) is disordered. Positions 198–308 (DDWDFLPPKK…YSPDANIYAY (111 aa)) are P-domain. Over residues 207–251 (KIKDPDASKPEDWDERAKIDDPTDSKPEDWDKPEHIPDPDAKKPE) the composition is skewed to basic and acidic residues. The residue at position 209 (Lys-209) is an N6-acetyllysine. Repeat copies occupy residues 210–221 (DPDASKPEDWDE), 227–238 (DPTDSKPEDWDK), 244–255 (DPDAKKPEDWDE), 259–269 (GEWEPPVIQNP), 273–283 (GEWKPRQIDNP), and 287–297 (GTWIHPEIDNP). The interaction with PPIB stretch occupies residues 237-270 (DKPEHIPDPDAKKPEDWDEEMDGEWEPPVIQNPE). The segment covering 252–261 (DWDEEMDGEW) has biased composition (acidic residues). A 3 X approximate repeats region spans residues 259 to 297 (GEWEPPVIQNPEYKGEWKPRQIDNPDYKGTWIHPEIDNP). A C-domain region spans residues 309–418 (DSFAVLGLDL…AAAGQAKDEL (110 aa)). Residue Asp-317 participates in an alpha-D-glucoside binding. Ca(2+) is bound at residue Asp-328. The disordered stretch occupies residues 349–418 (VTKTAEKQMK…AAAGQAKDEL (70 aa)). A compositionally biased stretch (basic and acidic residues) spans 352-379 (TAEKQMKDKQDEEQRLKEEEEEKKRKEE). Positions 380-409 (EEAEEDEEDKDDKEDEDEDEEDKDEEEEEA) are enriched in acidic residues. The Prevents secretion from ER motif lies at 415–418 (KDEL).

The protein belongs to the calreticulin family. In terms of assembly, monomer. Component of an EIF2 complex at least composed of CELF1/CUGBP1, CALR, CALR3, EIF2S1, EIF2S2, HSP90B1 and HSPA5. Interacts with PDIA3/ERp57 and SPACA9. Interacts with TRIM21. Interacts with NR3C1. Interacts with PPIB. Interacts (via P-domain) with PDIA5. Interacts with CLCC1.

It localises to the endoplasmic reticulum lumen. The protein localises to the cytoplasm. The protein resides in the cytosol. It is found in the secreted. Its subcellular location is the extracellular space. It localises to the extracellular matrix. The protein localises to the cell surface. The protein resides in the sarcoplasmic reticulum lumen. It is found in the cytoplasmic vesicle. Its subcellular location is the secretory vesicle. It localises to the cortical granule. The protein localises to the cytolytic granule. In terms of biological role, calcium-binding chaperone that promotes folding, oligomeric assembly and quality control in the endoplasmic reticulum (ER) via the calreticulin/calnexin cycle. This lectin interacts transiently with almost all of the monoglucosylated glycoproteins that are synthesized in the ER. Interacts with the DNA-binding domain of NR3C1 and mediates its nuclear export. Involved in maternal gene expression regulation. May participate in oocyte maturation via the regulation of calcium homeostasis. Present in the cortical granules of non-activated oocytes, is exocytosed during the cortical reaction in response to oocyte activation and might participate in the block to polyspermy. This is Calreticulin (CALR) from Oryctolagus cuniculus (Rabbit).